The sequence spans 812 residues: MNRKKLAAYGQEFEDDDEEGSSVSKKPTQIHEEIATDEKGKRRFHGAFTGGFSAGYWNTVGSKQGWVPQVFSSSRNERGEQIKQRAEDFMDAEDLGEYGIGNRSIKQTAAFGEGAGQKRKMAWERDTTSISTITQMFEDVVKPVSNSIGVRMLRSMGWREGRGIGLANVKQKQKRGGESSEAQFDREQASKVAPAYEFSNEDALVKQLTPLTGTHGIGYQGLRKTTVLNESYGRTTLALKSGKKNSKGIKGQAFGVGAFEEEDESVYSNYDLSQFDFSLDVAGASEESNLKTQKLVTAFELQPKRLNPRKFYAPPRVPPNFRGDHRPIPMDISKLPQMMKNDVKHMNAEQRAKFLGEDRVNALEIGGKSSKKPTERRSRWDIKANEVEKRDNERGGGEAEEDRDRRQRNRIEFPDEPMRQARFKEFLHYIRRGLPYPQPTDLTVWEWEWEKKEFESKLTSDERGMLPEVQSRAQPLAKTAIAAPIHEMMASKFVKEAGGDLKVGTKDEDKLAAVKMEMFGEKTRQSFDWYPDNLLAKRFNVPHPYPGSDTVGVPALQKTDWKRKDRLADIGGVSATLGLPNTANEIEMRERLLKSRAQRGAEEKKRNQSDDDDEKEYDDKDSDEEEENEAEPNNQKVDKAPKSFFDFIFGDGDGADSDESNSEDEEAEEKERQEILKKREEDLKRRREIVEKKEEENRKRVEKELKELENRDLLRVSKQQEDDDIQIIDETSASSFGPALPPSSKPVLSKTEVLKLLEKNMKKKKKDKKEKEKKKKSKKSKKSKKEKKTKRKHSSSSADDSGDNSDGWEEKK.

The segment at M1–R42 is disordered. A compositionally biased stretch (basic and acidic residues) spans Q29–G40. One can recognise a G-patch domain in the interval S145 to K191. 2 disordered regions span residues A384–E416 and N584–K812. The segment covering I586–S609 has biased composition (basic and acidic residues). Composition is skewed to acidic residues over residues D610–A630 and D653–E668. Residues E669–Q720 show a composition bias toward basic and acidic residues. Basic residues predominate over residues M761 to S794. The segment covering D800–K812 has biased composition (acidic residues).

The protein belongs to the GPATCH1 family.

The sequence is that of G patch domain-containing protein 1 homolog from Caenorhabditis elegans.